Consider the following 476-residue polypeptide: ATP synthase subunit beta (476 aa).

Residue Gly154–Thr161 coordinates ATP.

The protein belongs to the ATPase alpha/beta chains family. As to quaternary structure, F-type ATPases have 2 components, CF(1) - the catalytic core - and CF(0) - the membrane proton channel. CF(1) has five subunits: alpha(3), beta(3), gamma(1), delta(1), epsilon(1). CF(0) has three main subunits: a(1), b(2) and c(9-12). The alpha and beta chains form an alternating ring which encloses part of the gamma chain. CF(1) is attached to CF(0) by a central stalk formed by the gamma and epsilon chains, while a peripheral stalk is formed by the delta and b chains.

Its subcellular location is the cell inner membrane. It carries out the reaction ATP + H2O + 4 H(+)(in) = ADP + phosphate + 5 H(+)(out). Functionally, produces ATP from ADP in the presence of a proton gradient across the membrane. The catalytic sites are hosted primarily by the beta subunits. This Afipia carboxidovorans (strain ATCC 49405 / DSM 1227 / KCTC 32145 / OM5) (Oligotropha carboxidovorans) protein is ATP synthase subunit beta.